The sequence spans 486 residues: Regulatory protein ViaA (486 aa).

The protein belongs to the ViaA family. Homodimer. Interacts with RavA.

It localises to the cytoplasm. In terms of biological role, component of the RavA-ViaA chaperone complex, which may act on the membrane to optimize the function of some of the respiratory chains. ViaA stimulates the ATPase activity of RavA. The sequence is that of Regulatory protein ViaA from Erwinia tasmaniensis (strain DSM 17950 / CFBP 7177 / CIP 109463 / NCPPB 4357 / Et1/99).